Here is a 421-residue protein sequence, read N- to C-terminus: MQIKTFALSAAIAQVATLALADTSANYWQSFTSQINPKNISIPSIEQTSSIDPTQECAYYTPDASLFTFNASEWPSIWEVATTNGMNESAEFLSVYNSIDWTKAPNISVRTLDANGNLDTTGYNTATDPDCWWTATTCTSPKISDINDDISKCPEPETWGLTYDDGPNCSHNAFYDYLQEQKLKASMFYIGSNVVDWPYGAMRGVVDGHHIASHTWSHPQMTTKTNQEVLAEFYYTQKAIKLATGLTPRYWRPPYGDIDDRVRWIASQLGLTAVIWNLDTDDWSAGVTTTVEAVEQSYSDYIAMGTNGTFANSGNIVLTHEINTTMSLAVENLPKIISAYKQVIDVATCYNISHPYFEDYEWTNVLNGTKSSATASGSATSASASGGATTAAAHIQASTSGAMSVLPNLALISAFIATLLF.

Positions 1–21 are cleaved as a signal peptide; it reads MQIKTFALSAAIAQVATLALA. Asparagine 39, asparagine 70, asparagine 87, and asparagine 106 each carry an N-linked (GlcNAc...) asparagine glycan. One can recognise a NodB homology domain in the interval 157 to 349; sequence ETWGLTYDDG…YKQVIDVATC (193 aa). Catalysis depends on aspartate 164, which acts as the Proton acceptor. Aspartate 164 is an acetate binding site. Aspartate 165 contacts Co(2+). N-linked (GlcNAc...) asparagine glycosylation is present at asparagine 168. Histidine 214 and histidine 218 together coordinate Co(2+). Position 255 (tyrosine 255) interacts with acetate. N-linked (GlcNAc...) asparagine glycosylation occurs at asparagine 307. Histidine 320 serves as the catalytic Proton donor. Residues asparagine 323, asparagine 351, and asparagine 367 are each glycosylated (N-linked (GlcNAc...) asparagine). The GPI-anchor amidated threonine moiety is linked to residue threonine 390. Residues 391-421 constitute a propeptide, removed in mature form; that stretch reads AAAHIQASTSGAMSVLPNLALISAFIATLLF.

This sequence belongs to the polysaccharide deacetylase family. Co(2+) serves as cofactor.

It localises to the secreted. It is found in the cell wall. The protein localises to the cell membrane. It catalyses the reaction [(1-&gt;4)-N-acetyl-beta-D-glucosaminyl](n) + n H2O = chitosan + n acetate. Its function is as follows. Hydrolyzes the N-acetamido groups of N-acetyl-D-glucosamine residues in chitin to form chitosan and acetate. The sequence is that of Chitin deacetylase from Amylomyces rouxii (Filamentous fungus).